Here is a 404-residue protein sequence, read N- to C-terminus: MSRVSQARNLGKYFLLIDNMLVVLGFFVVFPLISIRFVDQMGWAAVMVGIALGLRQFIQQGLGIFGGAIADRFGAKPMIVTGMLMRAAGFATMGIAHEPWLLWFSCFLSGLGGTLFDPPRSALVVKLIRPEQRGRFFSLLMMQDSAGAVIGALLGSWLLQYDFRLVCAMGAILFIVCAIFNAWLLPAWKLSTVRTPVREGMRRVISDKRFVTYVLTLAGYYMLAVQVMLMLPIMVNDVAGSPAAVKWMYAIEACLSLTLLYPIARWSEKRFRLEHRLMAGLLIMSLSMIPIGLAGNLQQLFTLICAFYIGSVIAEPARETLSASLTDARARGSYMGFSRLGLAIGGAIGYIGGGWLFDMGKTLAQPELPWMMLGIIGFITFLALGWQFSHKRTPRQYTGARRLI.

The Cytoplasmic portion of the chain corresponds to 1-12 (MSRVSQARNLGK). The helical transmembrane segment at 13–33 (YFLLIDNMLVVLGFFVVFPLI) threads the bilayer. Residues 34-98 (SIRFVDQMGW…GFATMGIAHE (65 aa)) are Periplasmic-facing. Residues 99 to 116 (PWLLWFSCFLSGLGGTLF) form a helical membrane-spanning segment. Over 117–138 (DPPRSALVVKLIRPEQRGRFFS) the chain is Cytoplasmic. A helical transmembrane segment spans residues 139 to 159 (LLMMQDSAGAVIGALLGSWLL). Residues 160 to 164 (QYDFR) are Periplasmic-facing. The helical transmembrane segment at 165–185 (LVCAMGAILFIVCAIFNAWLL) threads the bilayer. Residues 186-213 (PAWKLSTVRTPVREGMRRVISDKRFVTY) are Cytoplasmic-facing. Residues 214–234 (VLTLAGYYMLAVQVMLMLPIM) traverse the membrane as a helical segment. At 235-243 (VNDVAGSPA) the chain is on the periplasmic side. Residues 244–264 (AVKWMYAIEACLSLTLLYPIA) form a helical membrane-spanning segment. Residues 265-276 (RWSEKRFRLEHR) lie on the Cytoplasmic side of the membrane. The chain crosses the membrane as a helical span at residues 277-297 (LMAGLLIMSLSMIPIGLAGNL). At 298–299 (QQ) the chain is on the periplasmic side. Residues 300–320 (LFTLICAFYIGSVIAEPARET) form a helical membrane-spanning segment. The Cytoplasmic portion of the chain corresponds to 321–339 (LSASLTDARARGSYMGFSR). Residues 340–360 (LGLAIGGAIGYIGGGWLFDMG) form a helical membrane-spanning segment. The Periplasmic portion of the chain corresponds to 361–367 (KTLAQPE). The helical transmembrane segment at 368–388 (LPWMMLGIIGFITFLALGWQF) threads the bilayer. Topologically, residues 389 to 404 (SHKRTPRQYTGARRLI) are cytoplasmic.

It belongs to the major facilitator superfamily. DHA1 family. MdtH (TC 2.A.1.2.21) subfamily.

It localises to the cell inner membrane. The chain is Multidrug resistance protein MdtH from Salmonella arizonae (strain ATCC BAA-731 / CDC346-86 / RSK2980).